Consider the following 1954-residue polypeptide: Protein GREB1 (1954 aa).

Disordered stretches follow at residues 48–83 (LSSLEGGSRADNEEEEEDGEGGLEPSSPPNAYQLPP), 238–342 (LAAF…AKHE), and 1083–1235 (KGPK…GSSS). A compositionally biased stretch (acidic residues) spans 59–68 (NEEEEEDGEG). A compositionally biased stretch (low complexity) spans 292–303 (SSLSALPRPSAL). Basic and acidic residues-rich tracts occupy residues 1083 to 1099 (KGPKNEALESDGEKLSS) and 1122 to 1133 (GPVKRERSHSHD). Over residues 1134-1146 (SASSSLSSRASGS) the composition is skewed to low complexity. The span at 1187 to 1196 (RVSQGSTVIS) shows a compositional bias: polar residues. Residues 1224 to 1235 (SSQLSSSSGSSS) show a composition bias toward low complexity. The helical transmembrane segment at 1873 to 1893 (DMVFSGLLLYLCDSFVGASFL) threads the bilayer.

The protein belongs to the GREB1 family.

The protein localises to the membrane. Functionally, may play a role in estrogen-stimulated cell proliferation. The chain is Protein GREB1 (Greb1) from Mus musculus (Mouse).